The chain runs to 699 residues: eEF1A lysine and N-terminal methyltransferase (699 aa).

N-acetylmethionine is present on methionine 1. A Phosphoserine modification is found at serine 267. Residues 433–459 (VSHKAQKKRKKDRKKQRPADAEDLPAA) are disordered. The span at 436-448 (KAQKKRKKDRKKQ) shows a compositional bias: basic residues.

Belongs to the methyltransferase superfamily. Forms a tripartite complex containing GAB1, METTL13 and SPRY2. Within the complex interacts with GAB1 and SPRY2.

The protein resides in the cytoplasm. It is found in the nucleus. The protein localises to the mitochondrion. The catalysed reaction is L-lysyl-[protein] + S-adenosyl-L-methionine = N(6)-methyl-L-lysyl-[protein] + S-adenosyl-L-homocysteine + H(+). It carries out the reaction N(6)-methyl-L-lysyl-[protein] + S-adenosyl-L-methionine = N(6),N(6)-dimethyl-L-lysyl-[protein] + S-adenosyl-L-homocysteine + H(+). It catalyses the reaction N-terminal glycyl-L-lysyl-L-glutamyl-[protein] + 3 S-adenosyl-L-methionine = N-terminal N,N,N-trimethyl-glycyl-L-lysyl-L-glutamyl-[protein] + 3 S-adenosyl-L-homocysteine + 3 H(+). Its activity is regulated as follows. Protein N-terminal methyltransferase activity is inhibited by GTP and GDP. Its function is as follows. Dual methyltransferase that catalyzes methylation of elongation factor 1-alpha (EEF1A1 and EEF1A2) at two different positions, and is therefore involved in the regulation of mRNA translation. Via its C-terminus, methylates EEF1A1 and EEF1A2 at the N-terminal residue 'Gly-2'. Via its N-terminus dimethylates EEF1A1 and EEF1A2 at residue 'Lys-55'. Has no activity towards core histones H2A, H2B, H3 and H4. This chain is eEF1A lysine and N-terminal methyltransferase, found in Homo sapiens (Human).